The following is a 161-amino-acid chain: Beta-lactoglobulin-2 (161 aa).

2 cysteine pairs are disulfide-bonded: Cys-66-Cys-159 and Cys-106-Cys-119.

Belongs to the calycin superfamily. Lipocalin family. Monomer. Synthesized in mammary gland and secreted in milk.

Its subcellular location is the secreted. In terms of biological role, primary component of whey, it binds retinol and is probably involved in the transport of that molecule. The protein is Beta-lactoglobulin-2 (LGB2) of Canis lupus familiaris (Dog).